A 728-amino-acid polypeptide reads, in one-letter code: Catalase-peroxidase 1 (728 aa).

Positions 91-218 form a cross-link, tryptophyl-tyrosyl-methioninium (Trp-Tyr) (with M-244); the sequence is WHSAGTYRIA…LAAVQMGLIY (128 aa). The active-site Proton acceptor is the histidine 92. The tryptophyl-tyrosyl-methioninium (Tyr-Met) (with W-91) cross-link spans 218 to 244; it reads YVNPEGPDGNPDPVAAARDIRDTFARM. Histidine 259 provides a ligand contact to heme b.

It belongs to the peroxidase family. Peroxidase/catalase subfamily. As to quaternary structure, homodimer or homotetramer. Requires heme b as cofactor. Post-translationally, formation of the three residue Trp-Tyr-Met cross-link is important for the catalase, but not the peroxidase activity of the enzyme.

The catalysed reaction is H2O2 + AH2 = A + 2 H2O. It carries out the reaction 2 H2O2 = O2 + 2 H2O. Bifunctional enzyme with both catalase and broad-spectrum peroxidase activity. The chain is Catalase-peroxidase 1 from Burkholderia ambifaria (strain ATCC BAA-244 / DSM 16087 / CCUG 44356 / LMG 19182 / AMMD) (Burkholderia cepacia (strain AMMD)).